We begin with the raw amino-acid sequence, 621 residues long: 1-deoxy-D-xylulose-5-phosphate synthase (621 aa).

Residues histidine 80 and 121 to 123 (GHS) contribute to the thiamine diphosphate site. Residue aspartate 152 coordinates Mg(2+). Residues 153–154 (GA), asparagine 181, tyrosine 288, and glutamate 370 contribute to the thiamine diphosphate site. Asparagine 181 contributes to the Mg(2+) binding site.

Belongs to the transketolase family. DXPS subfamily. In terms of assembly, homodimer. It depends on Mg(2+) as a cofactor. Thiamine diphosphate is required as a cofactor.

The catalysed reaction is D-glyceraldehyde 3-phosphate + pyruvate + H(+) = 1-deoxy-D-xylulose 5-phosphate + CO2. Its pathway is metabolic intermediate biosynthesis; 1-deoxy-D-xylulose 5-phosphate biosynthesis; 1-deoxy-D-xylulose 5-phosphate from D-glyceraldehyde 3-phosphate and pyruvate: step 1/1. In terms of biological role, catalyzes the acyloin condensation reaction between C atoms 2 and 3 of pyruvate and glyceraldehyde 3-phosphate to yield 1-deoxy-D-xylulose-5-phosphate (DXP). The chain is 1-deoxy-D-xylulose-5-phosphate synthase from Vibrio vulnificus (strain CMCP6).